Consider the following 906-residue polypeptide: Translation initiation factor IF-2 (906 aa).

Disordered stretches follow at residues 94–125 (APEK…PETA), 165–232 (ESEA…TGKK), and 270–321 (RQEQ…SSEV). Basic and acidic residues-rich tracts occupy residues 165–176 (ESEAEKGTEIEK), 222–232 (GPAEARETGKK), and 270–284 (RQEQ…KREA). Over residues 299 to 313 (QQRRSLKRGGKRKKY) the composition is skewed to basic residues. The 170-residue stretch at 405 to 574 (ERPPVITIMG…LLQAEMMELK (170 aa)) folds into the tr-type G domain. The G1 stretch occupies residues 414-421 (GHVDHGKT). 414–421 (GHVDHGKT) serves as a coordination point for GTP. A G2 region spans residues 439-443 (GITQH). Positions 460-463 (DTPG) are G3. GTP is bound by residues 460 to 464 (DTPGH) and 514 to 517 (NKMD). A G4 region spans residues 514-517 (NKMD). A G5 region spans residues 550 to 552 (SAH).

The protein belongs to the TRAFAC class translation factor GTPase superfamily. Classic translation factor GTPase family. IF-2 subfamily.

Its subcellular location is the cytoplasm. In terms of biological role, one of the essential components for the initiation of protein synthesis. Protects formylmethionyl-tRNA from spontaneous hydrolysis and promotes its binding to the 30S ribosomal subunits. Also involved in the hydrolysis of GTP during the formation of the 70S ribosomal complex. The protein is Translation initiation factor IF-2 of Sulfurovum sp. (strain NBC37-1).